The following is a 130-amino-acid chain: Small ribosomal subunit protein eS17 (130 aa).

Basic and acidic residues predominate over residues 74-84 (QEEERERRDNY). Residues 74 to 97 (QEEERERRDNYMPEISTVDPSQLT) form a disordered region.

This sequence belongs to the eukaryotic ribosomal protein eS17 family.

The polypeptide is Small ribosomal subunit protein eS17 (rps-17) (Caenorhabditis elegans).